Reading from the N-terminus, the 451-residue chain is Serine--tRNA ligase (451 aa).

258–260 (TSE) contacts L-serine. 289 to 291 (RSE) is a binding site for ATP. E312 lines the L-serine pocket. 376–379 (EISS) lines the ATP pocket. Residue S411 coordinates L-serine.

It belongs to the class-II aminoacyl-tRNA synthetase family. Type-1 seryl-tRNA synthetase subfamily. As to quaternary structure, homodimer. The tRNA molecule binds across the dimer.

Its subcellular location is the cytoplasm. The catalysed reaction is tRNA(Ser) + L-serine + ATP = L-seryl-tRNA(Ser) + AMP + diphosphate + H(+). It carries out the reaction tRNA(Sec) + L-serine + ATP = L-seryl-tRNA(Sec) + AMP + diphosphate + H(+). Its pathway is aminoacyl-tRNA biosynthesis; selenocysteinyl-tRNA(Sec) biosynthesis; L-seryl-tRNA(Sec) from L-serine and tRNA(Sec): step 1/1. In terms of biological role, catalyzes the attachment of serine to tRNA(Ser). Is also able to aminoacylate tRNA(Sec) with serine, to form the misacylated tRNA L-seryl-tRNA(Sec), which will be further converted into selenocysteinyl-tRNA(Sec). This Bordetella bronchiseptica (strain ATCC BAA-588 / NCTC 13252 / RB50) (Alcaligenes bronchisepticus) protein is Serine--tRNA ligase.